The following is a 227-amino-acid chain: Cytochrome c oxidase subunit 2 (227 aa).

Topologically, residues 1–14 (MAYPFQLGLQDATS) are mitochondrial intermembrane. The chain crosses the membrane as a helical span at residues 15 to 45 (PIMEELLHFHDHTLMIVFLISSLVLYIISLM). The Mitochondrial matrix segment spans residues 46-59 (LTTKLTHTSTMDAQ). A helical transmembrane segment spans residues 60–87 (EVETVWTILPAIILILIALPSLRILYMM). Topologically, residues 88-227 (DEINNPSLTV…YFETWSALMV (140 aa)) are mitochondrial intermembrane. Cu cation-binding residues include His-161, Cys-196, Glu-198, Cys-200, His-204, and Met-207. Residue Glu-198 participates in Mg(2+) binding. Position 218 is a phosphotyrosine (Tyr-218).

The protein belongs to the cytochrome c oxidase subunit 2 family. As to quaternary structure, component of the cytochrome c oxidase (complex IV, CIV), a multisubunit enzyme composed of 14 subunits. The complex is composed of a catalytic core of 3 subunits MT-CO1, MT-CO2 and MT-CO3, encoded in the mitochondrial DNA, and 11 supernumerary subunits COX4I, COX5A, COX5B, COX6A, COX6B, COX6C, COX7A, COX7B, COX7C, COX8 and NDUFA4, which are encoded in the nuclear genome. The complex exists as a monomer or a dimer and forms supercomplexes (SCs) in the inner mitochondrial membrane with NADH-ubiquinone oxidoreductase (complex I, CI) and ubiquinol-cytochrome c oxidoreductase (cytochrome b-c1 complex, complex III, CIII), resulting in different assemblies (supercomplex SCI(1)III(2)IV(1) and megacomplex MCI(2)III(2)IV(2)). Found in a complex with TMEM177, COA6, COX18, COX20, SCO1 and SCO2. Interacts with TMEM177 in a COX20-dependent manner. Interacts with COX20. Interacts with COX16. The cofactor is Cu cation.

It is found in the mitochondrion inner membrane. The catalysed reaction is 4 Fe(II)-[cytochrome c] + O2 + 8 H(+)(in) = 4 Fe(III)-[cytochrome c] + 2 H2O + 4 H(+)(out). In terms of biological role, component of the cytochrome c oxidase, the last enzyme in the mitochondrial electron transport chain which drives oxidative phosphorylation. The respiratory chain contains 3 multisubunit complexes succinate dehydrogenase (complex II, CII), ubiquinol-cytochrome c oxidoreductase (cytochrome b-c1 complex, complex III, CIII) and cytochrome c oxidase (complex IV, CIV), that cooperate to transfer electrons derived from NADH and succinate to molecular oxygen, creating an electrochemical gradient over the inner membrane that drives transmembrane transport and the ATP synthase. Cytochrome c oxidase is the component of the respiratory chain that catalyzes the reduction of oxygen to water. Electrons originating from reduced cytochrome c in the intermembrane space (IMS) are transferred via the dinuclear copper A center (CU(A)) of subunit 2 and heme A of subunit 1 to the active site in subunit 1, a binuclear center (BNC) formed by heme A3 and copper B (CU(B)). The BNC reduces molecular oxygen to 2 water molecules using 4 electrons from cytochrome c in the IMS and 4 protons from the mitochondrial matrix. This is Cytochrome c oxidase subunit 2 (MT-CO2) from Canis adustus (Side-striped jackal).